Reading from the N-terminus, the 382-residue chain is Mannitol-1-phosphate 5-dehydrogenase (382 aa).

3 to 14 (VLHFGAGNIGRG) contributes to the NAD(+) binding site.

This sequence belongs to the mannitol dehydrogenase family.

The enzyme catalyses D-mannitol 1-phosphate + NAD(+) = beta-D-fructose 6-phosphate + NADH + H(+). This is Mannitol-1-phosphate 5-dehydrogenase from Sodalis glossinidius (strain morsitans).